Reading from the N-terminus, the 176-residue chain is O-acetyl-ADP-ribose deacetylase (176 aa).

The 175-residue stretch at 1-175 folds into the Macro domain; that stretch reads MSGRINVVQG…LYQRLLGQYD (175 aa). Residues 11-12, Asn-25, 33-35, and 122-126 each bind substrate; these read DI, GVD, and STGIY. Residue Asp-35 is the Proton acceptor of the active site.

The protein belongs to the MacroD-type family. YmdB subfamily. As to quaternary structure, homodimer. Interacts with RNase III.

The enzyme catalyses 3''-O-acetyl-ADP-D-ribose + H2O = ADP-D-ribose + acetate + H(+). It catalyses the reaction 2''-O-acetyl-ADP-D-ribose + H2O = ADP-D-ribose + acetate + H(+). In terms of biological role, deacetylates O-acetyl-ADP ribose to yield ADP-ribose and free acetate. Down-regulates ribonuclease 3 (RNase III) activity. Acts by interacting directly with the region of the ribonuclease that is required for dimerization/activation. The protein is O-acetyl-ADP-ribose deacetylase of Cronobacter turicensis (strain DSM 18703 / CCUG 55852 / LMG 23827 / z3032).